We begin with the raw amino-acid sequence, 68 residues long: Large ribosomal subunit protein uL29 (68 aa).

Residues 32–68 (QDQLKRRTGSLDNPAERTQHRRDLARVLTVLTQKTKA) form a disordered region. Basic and acidic residues predominate over residues 45–56 (PAERTQHRRDLA).

It belongs to the universal ribosomal protein uL29 family.

This is Large ribosomal subunit protein uL29 from Myxococcus xanthus (strain DK1622).